Here is a 123-residue protein sequence, read N- to C-terminus: Histone H2B (123 aa).

Residues Met-1 to Arg-31 are disordered. Positions Gly-9 to Arg-31 are enriched in basic residues. The O-linked (GlcNAc) serine glycan is linked to Ser-110. Lys-118 participates in a covalent cross-link: Glycyl lysine isopeptide (Lys-Gly) (interchain with G-Cter in ubiquitin).

Belongs to the histone H2B family. In terms of assembly, the nucleosome is a histone octamer containing two molecules each of H2A, H2B, H3 and H4 assembled in one H3-H4 heterotetramer and two H2A-H2B heterodimers. The octamer wraps approximately 147 bp of DNA. Monoubiquitination of Lys-118 gives a specific tag for epigenetic transcriptional activation and is also prerequisite for histone H3 'Lys-4' and 'Lys-79' methylation. In terms of processing, glcNAcylation at Ser-110 promotes monoubiquitination of Lys-118. It fluctuates in response to extracellular glucose, and associates with transcribed genes.

It localises to the nucleus. The protein resides in the chromosome. In terms of biological role, core component of nucleosome. Nucleosomes wrap and compact DNA into chromatin, limiting DNA accessibility to the cellular machineries which require DNA as a template. Histones thereby play a central role in transcription regulation, DNA repair, DNA replication and chromosomal stability. DNA accessibility is regulated via a complex set of post-translational modifications of histones, also called histone code, and nucleosome remodeling. The chain is Histone H2B from Platynereis dumerilii (Dumeril's clam worm).